A 281-amino-acid chain; its full sequence is Fructose-bisphosphate aldolase class 1 (281 aa).

Catalysis depends on K191, which acts as the Schiff-base intermediate with dihydroxyacetone-P.

Belongs to the DeoC/FbaB aldolase family. Homooctamer.

It localises to the cytoplasm. The catalysed reaction is beta-D-fructose 1,6-bisphosphate = D-glyceraldehyde 3-phosphate + dihydroxyacetone phosphate. Its activity is regulated as follows. Activated by citrate. The protein is Fructose-bisphosphate aldolase class 1 (fba) of Pyrococcus abyssi (strain GE5 / Orsay).